Consider the following 199-residue polypeptide: Recombination protein RecR (199 aa).

The C4-type zinc-finger motif lies at 57-72 (CEICGNMDTKNICHIC). The Toprim domain occupies 80–175 (STIAIVETVA…KISRLASGIP (96 aa)).

This sequence belongs to the RecR family.

Its function is as follows. May play a role in DNA repair. It seems to be involved in an RecBC-independent recombinational process of DNA repair. It may act with RecF and RecO. This is Recombination protein RecR from Rickettsia typhi (strain ATCC VR-144 / Wilmington).